A 215-amino-acid chain; its full sequence is 3-demethoxyubiquinol 3-hydroxylase (215 aa).

Residues 26–47 are disordered; sequence PSSAHSQRPSPAVVQPEHKMSE. The Fe cation site is built by E64, E94, H97, E146, E178, and H181.

It belongs to the COQ7 family. Fe cation serves as cofactor.

The protein localises to the cell membrane. It catalyses the reaction a 5-methoxy-2-methyl-3-(all-trans-polyprenyl)benzene-1,4-diol + AH2 + O2 = a 3-demethylubiquinol + A + H2O. The protein operates within cofactor biosynthesis; ubiquinone biosynthesis. Functionally, catalyzes the hydroxylation of 2-nonaprenyl-3-methyl-6-methoxy-1,4-benzoquinol during ubiquinone biosynthesis. This Pseudomonas syringae pv. syringae (strain B728a) protein is 3-demethoxyubiquinol 3-hydroxylase.